We begin with the raw amino-acid sequence, 338 residues long: Inositol 2-dehydrogenase (338 aa).

It belongs to the Gfo/Idh/MocA family. Homotetramer.

It carries out the reaction myo-inositol + NAD(+) = scyllo-inosose + NADH + H(+). Its function is as follows. Involved in the oxidation of myo-inositol (MI) to 2-keto-myo-inositol (2KMI or 2-inosose). The chain is Inositol 2-dehydrogenase from Azotobacter vinelandii (strain DJ / ATCC BAA-1303).